We begin with the raw amino-acid sequence, 299 residues long: AT-hook motif nuclear-localized protein 25 (299 aa).

Disordered regions lie at residues 1–87 (MSSY…RDSP) and 216–251 (EEET…CESN). 2 stretches are compositionally biased toward basic and acidic residues: residues 14-23 (HLQRPEDSRT) and 33-42 (NRSEADEAKA). Low complexity-rich tracts occupy residues 44–72 (TTPT…PAGS) and 224–239 (TTGV…QSSE). The segment at residues 63-75 (RRPRGRPAGSKNK) is a DNA-binding region (a.T hook). The PPC domain maps to 87 to 233 (PNVLRSHVLE…TTGVQQQQPE (147 aa)). Residues 240–251 (VTGSGAQACESN) show a composition bias toward polar residues.

Homodimer. Interacts with AHL27 and AHL29. As to expression, expressed in seedlings, leaves, stems, floral tips and flowers.

The protein resides in the nucleus. Transcription factor that specifically binds AT-rich DNA sequences related to the nuclear matrix attachment regions (MARs). Binds the DNA sequence GNFEI (GA-negative feedback element I) in the GA3OX1 promoter. Binding to GNFEI sequence is required for GA-negative feedback regulation of GA3OX1. The chain is AT-hook motif nuclear-localized protein 25 from Arabidopsis thaliana (Mouse-ear cress).